The primary structure comprises 226 residues: 2,3-bisphosphoglycerate-dependent phosphoglycerate mutase (226 aa).

Residues 8 to 15 (RHGQSVWN), 21 to 22 (TG), Arg58, 109 to 112 (ERMY), Lys120, 136 to 137 (RR), and 180 to 181 (GN) each bind substrate. The active-site Tele-phosphohistidine intermediate is His9. The Proton donor/acceptor role is filled by Glu109.

Belongs to the phosphoglycerate mutase family. BPG-dependent PGAM subfamily.

The enzyme catalyses (2R)-2-phosphoglycerate = (2R)-3-phosphoglycerate. It participates in carbohydrate degradation; glycolysis; pyruvate from D-glyceraldehyde 3-phosphate: step 3/5. Its function is as follows. Catalyzes the interconversion of 2-phosphoglycerate and 3-phosphoglycerate. The sequence is that of 2,3-bisphosphoglycerate-dependent phosphoglycerate mutase from Chlamydia trachomatis serovar A (strain ATCC VR-571B / DSM 19440 / HAR-13).